A 316-amino-acid chain; its full sequence is MKIVKISPRGYCYGVVDAMVIARNAALDTSLPRPIYILGMIVHNKHVTDAFEEDGIITLDGPSRLDILDKIDSGTVIFTAHGVSPEVKQRAKEKGLTTIDATCPDVTKTHDLIEAKKAEGYHVIYIGKKNHPEPEGAVGIAPDIVHLIERADDLKTLEIPTDKILVTNQTTMSQWDVQHLMEDIQKKFPTAEFHKEICLATQVRQEAVAKQADVADLTIVVGDPKSNNSNRLAQVSQEIAGTKAYRVADVSEINLEWLQGVENVAVTAGASTPTPITKEVIAFLEQYDPMNPATWERVRKVPLQKILPRVKVKKEQ.

Cys-12 contributes to the [4Fe-4S] cluster binding site. His-43 and His-81 together coordinate (2E)-4-hydroxy-3-methylbut-2-enyl diphosphate. Residues His-43 and His-81 each coordinate dimethylallyl diphosphate. Positions 43 and 81 each coordinate isopentenyl diphosphate. Cys-103 serves as a coordination point for [4Fe-4S] cluster. Position 131 (His-131) interacts with (2E)-4-hydroxy-3-methylbut-2-enyl diphosphate. A dimethylallyl diphosphate-binding site is contributed by His-131. Residue His-131 participates in isopentenyl diphosphate binding. Glu-133 (proton donor) is an active-site residue. Thr-170 contributes to the (2E)-4-hydroxy-3-methylbut-2-enyl diphosphate binding site. Position 198 (Cys-198) interacts with [4Fe-4S] cluster. (2E)-4-hydroxy-3-methylbut-2-enyl diphosphate contacts are provided by Ser-226, Asn-228, and Ser-271. Residues Ser-226, Asn-228, and Ser-271 each coordinate dimethylallyl diphosphate. 3 residues coordinate isopentenyl diphosphate: Ser-226, Asn-228, and Ser-271.

Belongs to the IspH family. [4Fe-4S] cluster is required as a cofactor.

The enzyme catalyses isopentenyl diphosphate + 2 oxidized [2Fe-2S]-[ferredoxin] + H2O = (2E)-4-hydroxy-3-methylbut-2-enyl diphosphate + 2 reduced [2Fe-2S]-[ferredoxin] + 2 H(+). It catalyses the reaction dimethylallyl diphosphate + 2 oxidized [2Fe-2S]-[ferredoxin] + H2O = (2E)-4-hydroxy-3-methylbut-2-enyl diphosphate + 2 reduced [2Fe-2S]-[ferredoxin] + 2 H(+). It functions in the pathway isoprenoid biosynthesis; dimethylallyl diphosphate biosynthesis; dimethylallyl diphosphate from (2E)-4-hydroxy-3-methylbutenyl diphosphate: step 1/1. It participates in isoprenoid biosynthesis; isopentenyl diphosphate biosynthesis via DXP pathway; isopentenyl diphosphate from 1-deoxy-D-xylulose 5-phosphate: step 6/6. In terms of biological role, catalyzes the conversion of 1-hydroxy-2-methyl-2-(E)-butenyl 4-diphosphate (HMBPP) into a mixture of isopentenyl diphosphate (IPP) and dimethylallyl diphosphate (DMAPP). Acts in the terminal step of the DOXP/MEP pathway for isoprenoid precursor biosynthesis. This chain is 4-hydroxy-3-methylbut-2-enyl diphosphate reductase, found in Bacillus cereus (strain AH820).